Reading from the N-terminus, the 368-residue chain is MNTFGREFRITTFGESHGKAVGVVIDGVPAGLPLSEEDIKRELERRMFCHIHWLNPRCEPEEFEILSGVKNGHTQGTPIAIVIWNKRAISSYYDELWMKPRPGHADLAYYLKYGKFYDHRGGGRASGRTTAAIVAAGAVAKKLLSQLGVDVCGHIIELGGIEVRRSYTFEEVKSSWAKPLPVVDDEALAAMLETLRKNAAEGDSVGGGVEIWAVGVPPGLGEPHFGKIKAELAMAAFSIPAVVALDWGAGRALAKMRGSEANDPIIIKSGRPALESNKIGGVLGGITVGEPIYFRVWFKPTPSVRKPQRTVDLAKMEPAVLEFKGRYDVSVVPKALVALEAMTAITLADHALRAGLVRRDRPLRDPVV.

An NADP(+)-binding site is contributed by Arg46. Residues 124 to 126 (RAS), Gly284, 299 to 303 (KPTPS), and Arg326 each bind FMN.

This sequence belongs to the chorismate synthase family. It depends on FMNH2 as a cofactor.

The enzyme catalyses 5-O-(1-carboxyvinyl)-3-phosphoshikimate = chorismate + phosphate. Its pathway is metabolic intermediate biosynthesis; chorismate biosynthesis; chorismate from D-erythrose 4-phosphate and phosphoenolpyruvate: step 7/7. Its function is as follows. Catalyzes the anti-1,4-elimination of the C-3 phosphate and the C-6 proR hydrogen from 5-enolpyruvylshikimate-3-phosphate (EPSP) to yield chorismate, which is the branch point compound that serves as the starting substrate for the three terminal pathways of aromatic amino acid biosynthesis. This reaction introduces a second double bond into the aromatic ring system. The chain is Chorismate synthase from Pyrobaculum aerophilum (strain ATCC 51768 / DSM 7523 / JCM 9630 / CIP 104966 / NBRC 100827 / IM2).